Reading from the N-terminus, the 251-residue chain is uncharacterized protein (251 aa).

The protein belongs to the PaiB family.

This is an uncharacterized protein from Emericella nidulans (strain FGSC A4 / ATCC 38163 / CBS 112.46 / NRRL 194 / M139) (Aspergillus nidulans).